Reading from the N-terminus, the 456-residue chain is uncharacterized protein (456 aa).

One can recognise a YrdC-like domain in the interval 277–440; it reads IKNTKTIKQL…TKQLVRTTAK (164 aa).

This is an uncharacterized protein from Mycoplasma genitalium (strain ATCC 33530 / DSM 19775 / NCTC 10195 / G37) (Mycoplasmoides genitalium).